The primary structure comprises 737 residues: Catalase-peroxidase (737 aa).

A disordered region spans residues 1–32 (MSKENMSNEGKCPFNHGAAGTNQSSGRGTSNK). The span at 20-32 (GTNQSSGRGTSNK) shows a compositional bias: polar residues. A cross-link (tryptophyl-tyrosyl-methioninium (Trp-Tyr) (with M-252)) is located at residues 103-226 (WHSAGTYRTA…LAAVQMGLIY (124 aa)). H104 (proton acceptor) is an active-site residue. A cross-link (tryptophyl-tyrosyl-methioninium (Tyr-Met) (with W-103)) is located at residues 226–252 (YVNPEGPEGKPDTLASARDIRDTFGRM). H267 is a binding site for heme b.

The protein belongs to the peroxidase family. Peroxidase/catalase subfamily. In terms of assembly, homodimer or homotetramer. Heme b is required as a cofactor. Formation of the three residue Trp-Tyr-Met cross-link is important for the catalase, but not the peroxidase activity of the enzyme.

It catalyses the reaction H2O2 + AH2 = A + 2 H2O. The catalysed reaction is 2 H2O2 = O2 + 2 H2O. Bifunctional enzyme with both catalase and broad-spectrum peroxidase activity. This Marinomonas sp. (strain MWYL1) protein is Catalase-peroxidase.